A 146-amino-acid chain; its full sequence is Hemoglobin subunit beta (146 aa).

An N-acetylvaline modification is found at valine 1. The 145-residue stretch at 2–146 (HLTPEEKNAV…VANALAHKYH (145 aa)) folds into the Globin domain. Threonine 12 is modified (phosphothreonine). Serine 44 is subject to Phosphoserine. Lysine 59 bears the N6-acetyllysine mark. Residue histidine 63 coordinates heme b. Residue lysine 82 is modified to N6-acetyllysine. Position 92 (histidine 92) interacts with heme b. Cysteine 93 carries the S-nitrosocysteine modification. At lysine 144 the chain carries N6-acetyllysine.

Belongs to the globin family. In terms of assembly, heterotetramer of two alpha chains and two beta chains. As to expression, red blood cells.

Functionally, involved in oxygen transport from the lung to the various peripheral tissues. In Papio cynocephalus (Yellow baboon), this protein is Hemoglobin subunit beta (HBB).